The primary structure comprises 405 residues: Deoxyguanosinetriphosphate triphosphohydrolase-like protein (405 aa).

In terms of domain architecture, HD spans 75-219 (RLTHTIEVAQ…AAIADDIAYN (145 aa)).

This sequence belongs to the dGTPase family. Type 2 subfamily.

The polypeptide is Deoxyguanosinetriphosphate triphosphohydrolase-like protein (Sinorhizobium medicae (strain WSM419) (Ensifer medicae)).